Reading from the N-terminus, the 79-residue chain is Major outer membrane lipoprotein Lpp 2 (79 aa).

The first 21 residues, 1 to 21 (MNRTNKLILGAVVLGSTLLAG), serve as a signal peptide directing secretion. The N-palmitoyl cysteine moiety is linked to residue Cys22. Cys22 is lipidated: S-diacylglycerol cysteine. 2 repeats span residues 25–35 (NAKIDQLSSDV) and 39–49 (SAKVDQLSNDV). A coiled-coil region spans residues 28–69 (IDQLSSDVQTLSAKVDQLSNDVNAMRSDVQAAKDDAARANQR). N6-murein peptidoglycan lysine is present on Lys79.

Belongs to the Lpp family. Homotrimer.

The protein localises to the cell outer membrane. The protein resides in the secreted. It localises to the cell wall. Functionally, a highly abundant outer membrane lipoprotein that controls the distance between the inner and outer membranes. The only protein known to be covalently linked to the peptidoglycan network (PGN). Also non-covalently binds the PGN. The link between the cell outer membrane and PGN contributes to maintenance of the structural and functional integrity of the cell envelope, and maintains the correct distance between the PGN and the outer membrane. The chain is Major outer membrane lipoprotein Lpp 2 from Salmonella typhi.